Here is a 428-residue protein sequence, read N- to C-terminus: C4-dicarboxylate transport protein (428 aa).

8 consecutive transmembrane segments (helical) span residues 8 to 28, 44 to 64, 76 to 96, 142 to 162, 184 to 204, 222 to 242, 326 to 346, and 352 to 372; these read SLYFQVLTAIAIGILLGHFYP, LIKMIIAPVIFCTVVTGIAGM, VALLYFEIVSTIALIIGLIIV, IGAFASGNILQVLLFAVLFGF, VIFGIINMIMRLAPIGAFGAM, LIICFYITCILFVVLVLGSIA, IVHQITLLIVLLLSSKGAAGV, and IVLAATLSAVGHLPVAGLALI.

The protein belongs to the dicarboxylate/amino acid:cation symporter (DAACS) (TC 2.A.23) family.

It localises to the cell inner membrane. Its function is as follows. Responsible for the transport of dicarboxylates such as succinate, fumarate, and malate from the periplasm across the membrane. The protein is C4-dicarboxylate transport protein of Shigella dysenteriae serotype 1 (strain Sd197).